The chain runs to 263 residues: N-glycosylase/DNA lyase (263 aa).

Gln-43, Ser-71, and Trp-82 together coordinate 8-oxoguanine. The tract at residues 139–204 (RRYYFENMMG…EDVRIKAYTE (66 aa)) is helix-hairpin-helix. Lys-164 acts as the Schiff-base intermediate with DNA in catalysis. 2 residues coordinate 8-oxoguanine: Phe-168 and Pro-194. The active site involves Asp-196. The 8-oxoguanine site is built by Asp-230 and Trp-234.

The protein belongs to the archaeal N-glycosylase/DNA lyase (AGOG) family.

The catalysed reaction is 2'-deoxyribonucleotide-(2'-deoxyribose 5'-phosphate)-2'-deoxyribonucleotide-DNA = a 3'-end 2'-deoxyribonucleotide-(2,3-dehydro-2,3-deoxyribose 5'-phosphate)-DNA + a 5'-end 5'-phospho-2'-deoxyribonucleoside-DNA + H(+). DNA repair enzyme that is part of the base excision repair (BER) pathway; protects from oxidative damage by removing the major product of DNA oxidation, 8-oxoguanine (GO), from single- and double-stranded DNA substrates. This Thermococcus kodakarensis (strain ATCC BAA-918 / JCM 12380 / KOD1) (Pyrococcus kodakaraensis (strain KOD1)) protein is N-glycosylase/DNA lyase.